A 387-amino-acid chain; its full sequence is Gamma-butyrobetaine dioxygenase (387 aa).

Residues C38, C40, C43, and H82 each coordinate Zn(2+). Residues H202, D204, and H347 each coordinate Fe cation. Position 351 is a phosphoserine (S351).

This sequence belongs to the gamma-BBH/TMLD family. Requires Fe(2+) as cofactor. L-ascorbate is required as a cofactor. As to expression, expressed in the liver and in some extend in the testis and the epididymis.

The protein resides in the cytoplasm. It catalyses the reaction 4-(trimethylamino)butanoate + 2-oxoglutarate + O2 = carnitine + succinate + CO2. It functions in the pathway amine and polyamine biosynthesis; carnitine biosynthesis. Catalyzes the formation of L-carnitine from gamma-butyrobetaine. In Rattus norvegicus (Rat), this protein is Gamma-butyrobetaine dioxygenase (Bbox1).